Reading from the N-terminus, the 461-residue chain is ATP synthase subunit beta 2 (461 aa).

151–158 (GGAGVGKT) lines the ATP pocket.

It belongs to the ATPase alpha/beta chains family. In terms of assembly, F-type ATPases have 2 components, CF(1) - the catalytic core - and CF(0) - the membrane proton channel. CF(1) has five subunits: alpha(3), beta(3), gamma(1), delta(1), epsilon(1). CF(0) has three main subunits: a(1), b(2) and c(9-12). The alpha and beta chains form an alternating ring which encloses part of the gamma chain. CF(1) is attached to CF(0) by a central stalk formed by the gamma and epsilon chains, while a peripheral stalk is formed by the delta and b chains.

The protein resides in the cell inner membrane. It catalyses the reaction ATP + H2O + 4 H(+)(in) = ADP + phosphate + 5 H(+)(out). In terms of biological role, produces ATP from ADP in the presence of a proton gradient across the membrane. The catalytic sites are hosted primarily by the beta subunits. The sequence is that of ATP synthase subunit beta 2 from Vibrio campbellii (strain ATCC BAA-1116).